A 264-amino-acid polypeptide reads, in one-letter code: Thymidylate synthase (264 aa).

Arginine 21 lines the dUMP pocket. Histidine 51 contributes to the (6R)-5,10-methylene-5,6,7,8-tetrahydrofolate binding site. 126–127 (RR) contributes to the dUMP binding site. Catalysis depends on cysteine 146, which acts as the Nucleophile. Residues 166 to 169 (RSCD), asparagine 177, and 207 to 209 (HLY) each bind dUMP. Aspartate 169 is a (6R)-5,10-methylene-5,6,7,8-tetrahydrofolate binding site. Position 263 (alanine 263) interacts with (6R)-5,10-methylene-5,6,7,8-tetrahydrofolate.

Belongs to the thymidylate synthase family. Bacterial-type ThyA subfamily. Homodimer.

It localises to the cytoplasm. It catalyses the reaction dUMP + (6R)-5,10-methylene-5,6,7,8-tetrahydrofolate = 7,8-dihydrofolate + dTMP. Its pathway is pyrimidine metabolism; dTTP biosynthesis. In terms of biological role, catalyzes the reductive methylation of 2'-deoxyuridine-5'-monophosphate (dUMP) to 2'-deoxythymidine-5'-monophosphate (dTMP) while utilizing 5,10-methylenetetrahydrofolate (mTHF) as the methyl donor and reductant in the reaction, yielding dihydrofolate (DHF) as a by-product. This enzymatic reaction provides an intracellular de novo source of dTMP, an essential precursor for DNA biosynthesis. This chain is Thymidylate synthase, found in Shewanella sp. (strain MR-4).